We begin with the raw amino-acid sequence, 119 residues long: U-scoloptoxin(01)-Cw1a (119 aa).

An N-terminal signal peptide occupies residues 1–22; that stretch reads MSKATNFYLFVLLGVFVALVRT. In terms of domain architecture, Chitin-binding type-2 spans 38-96; that stretch reads SFSCDGKKPGYYADQQMECQVYHVCTPDNEHAVLLCGPGTIFNQKHLVCDFPSNYACAD. A disulfide bridge links Cys-73 with Cys-86.

The protein belongs to the scoloptoxin-01 family. Contains 3 disulfide bonds. In terms of tissue distribution, expressed by the venom gland.

It is found in the secreted. The chain is U-scoloptoxin(01)-Cw1a from Cormocephalus westwoodi (Westwood's green centipede).